We begin with the raw amino-acid sequence, 236 residues long: UPF0257 lipoprotein YnfC (236 aa).

A signal peptide spans 1 to 16 (MKYKLLPCLLAILLTG). The N-palmitoyl cysteine moiety is linked to residue cysteine 17. Residue cysteine 17 is the site of S-diacylglycerol cysteine attachment.

It belongs to the UPF0257 family.

It is found in the cell membrane. The protein is UPF0257 lipoprotein YnfC of Escherichia coli O127:H6 (strain E2348/69 / EPEC).